We begin with the raw amino-acid sequence, 245 residues long: Dehydrogenase/reductase SDR family member 6 (245 aa).

NAD(+) contacts are provided by residues 16-18, Asp37, and Asp58; that span reads QGI. Arg144 provides a ligand contact to substrate. The active-site Proton acceptor is the Tyr147. Residues Lys151 and 180–184 contribute to the NAD(+) site; that span reads VDTPS. Residues Arg188 and Arg205 each coordinate substrate.

The protein belongs to the short-chain dehydrogenases/reductases (SDR) family. As to quaternary structure, homotetramer.

It localises to the cytoplasm. It catalyses the reaction cis-4-hydroxy-L-proline + NAD(+) = 4-oxo-L-proline + NADH + H(+). The enzyme catalyses (R)-3-hydroxybutanoate + NAD(+) = acetoacetate + NADH + H(+). The protein operates within amino-acid metabolism. It participates in siderophore biosynthesis. Its function is as follows. NAD(H)-dependent dehydrogenase/reductase with a preference for cyclic substrates. Catalyzes stereoselective conversion of 4-oxo-L-proline to cis-4-hydroxy-L-proline, likely a detoxification mechanism for ketoprolines. Mediates the formation of 2,5-dihydroxybenzoate (2,5-DHBA), a siderophore that chelates free cytoplasmic iron, thereby regulating iron transport and homeostasis while protecting cells against free radical-induced oxidative stress. The iron-siderophore complex is imported into mitochondria, providing an iron source for mitochondrial metabolic processes in particular heme synthesis. May act as a 3-hydroxybutyrate dehydrogenase. The protein is Dehydrogenase/reductase SDR family member 6 (bdh2) of Xenopus laevis (African clawed frog).